The sequence spans 132 residues: Small ribosomal subunit protein uS8 (132 aa).

Belongs to the universal ribosomal protein uS8 family. Part of the 30S ribosomal subunit. Contacts proteins S5 and S12.

In terms of biological role, one of the primary rRNA binding proteins, it binds directly to 16S rRNA central domain where it helps coordinate assembly of the platform of the 30S subunit. The protein is Small ribosomal subunit protein uS8 of Clostridioides difficile (strain 630) (Peptoclostridium difficile).